The chain runs to 237 residues: DNA repair protein RecO (237 aa).

The protein belongs to the RecO family.

Its function is as follows. Involved in DNA repair and RecF pathway recombination. The protein is DNA repair protein RecO of Flavobacterium johnsoniae (strain ATCC 17061 / DSM 2064 / JCM 8514 / BCRC 14874 / CCUG 350202 / NBRC 14942 / NCIMB 11054 / UW101) (Cytophaga johnsonae).